The following is a 630-amino-acid chain: MSSTQEKPEELDRIQKRVNKILEARLESDKDTLDALSGLSTFFTENTLQNRRNLRSQIEHRSVGINENFLKAFRQVKLSLDAVCEDLDTMATSVETMKSDLETSKALTKDLIKQTNTMQRERDRLEVHKQIAQAFLARFQLSGAEHQLLYGAAKDAPIVADFFRVLDRVQSIHADCRLLMQCGYQTAAIDIMEEMTLHQEGALERLYRWTQNHCRSLENNEIGPLIVEAMSRLQDRPVLFKYVIDEYAIARRAVLVRQFIEALTEGGPGGNPKPIELHAHDPKRYIGDMFAWLHQSIPTEKENLSLLFKKCDKQDISDQLQNALGYIADGVCHPLKVRVETILQAEKDTIVLFTISNLLRFYQQIMRQVVQGGSLEECLVELQKSSEQIYLGALAAQVRSVLQRPSGGSGLALEPPQRDLVPPPSVARLLNMLKEILSVATMVDGRQADITKIVSCVIDPLLQSVQESAAHLPTVDMGVYLLNCLHHMQSSLAVYEYMDERVERLQAQSDAQLDTLTSEQASSLVANLNLGPIYAILQSNQSKIETNLLKIFMSKMDAFLELPDVLLLPQVQLIMSSSHRAAVQKRSFNVIVAIYKQIYERVHDPANGFEQPEQLLHRTPEQVAHILTST.

This sequence belongs to the COG6 family. In terms of assembly, component of the conserved oligomeric Golgi complex which is composed of eight different subunits and is required for normal Golgi morphology and localization.

It is found in the golgi apparatus membrane. Functionally, required for normal Golgi function. The sequence is that of Conserved oligomeric Golgi complex subunit 6 from Drosophila melanogaster (Fruit fly).